We begin with the raw amino-acid sequence, 344 residues long: Zinc transporter 9 (344 aa).

The helical transmembrane segment at 1-21 threads the bilayer; the sequence is MASILISGAAGVSIPLVGTLL. The Cytoplasmic segment spans residues 22-30; the sequence is PLNGGLMRG. Residues 31–51 traverse the membrane as a helical segment; sequence AKAFAAGVILATGFVHMLSGG. Topologically, residues 52 to 72 are extracellular; the sequence is SKALSDPCLPEFPWKMFPFPE. A helical transmembrane segment spans residues 73–93; the sequence is FFAMVAALLTLLADFMITGYY. The Cytoplasmic portion of the chain corresponds to 94–188; the sequence is ERKQEKMMNQ…DVGLDSGVRH (95 aa). A helical membrane pass occupies residues 189–209; the sequence is VVVSQILEMGIVSHSIIIGIS. The Extracellular segment spans residues 210-221; the sequence is LGVSHSPCTIRP. A helical transmembrane segment spans residues 222–242; the sequence is LLLALSFHQFFEGFALGGCVA. The Cytoplasmic segment spans residues 243 to 251; the sequence is EARLTPRGS. A helical transmembrane segment spans residues 252–272; sequence AMMAFFFAITTPIGVAVGTAI. Residues 273 to 291 are Extracellular-facing; the sequence is ASSYNSYSVAALVAEGVLD. The chain crosses the membrane as a helical span at residues 292–312; the sequence is SLSAGILVYMALVDLIAADFL. Residues 313-323 lie on the Cytoplasmic side of the membrane; the sequence is SKKMSVDFRVQ. A helical transmembrane segment spans residues 324–344; the sequence is VVSYCFLFLGAGMMSALAIWA.

It belongs to the ZIP transporter (TC 2.A.5) family.

It is found in the cell membrane. Functionally, zinc transporter involved in zinc uptake in roots. Targeted by BZIP19 transcription factor in response to zinc-deficient conditions. The sequence is that of Zinc transporter 9 (ZIP9) from Arabidopsis thaliana (Mouse-ear cress).